Here is a 282-residue protein sequence, read N- to C-terminus: Small-conductance mechanosensitive channel (282 aa).

Over 1–23 (MWADIYHKLVEIYDIKAVKFLLD) the chain is Periplasmic. Residues 24-46 (VLKILIIAFIGIKFADFLIYRFY) form a helical membrane-spanning segment. Residues 47–66 (KLYSKSKIQLPQRKIDTLTS) are Cytoplasmic-facing. The chain crosses the membrane as a helical span at residues 67–87 (LTKNAVRYIIYFLAGASILKL). Residues 88–89 (FN) lie on the Periplasmic side of the membrane. The helical transmembrane segment at 90-110 (IDMTSLLAVAGIGSLAIGFGA) threads the bilayer. At 111–282 (QNLVKDMISG…TVILSEKKTN (172 aa)) the chain is on the cytoplasmic side.

Belongs to the MscS (TC 1.A.23) family. In terms of assembly, homoheptamer.

The protein resides in the cell inner membrane. Functionally, mechanosensitive ion channel that participates in the regulation of osmotic pressure changes within the cell, opening in response to stretch forces in the membrane lipid bilayer, without the need for other proteins. Has high selectivity for anions, and may contribute to resistance to hypoosmotic shock. The polypeptide is Small-conductance mechanosensitive channel (Caldanaerobacter subterraneus subsp. tengcongensis (strain DSM 15242 / JCM 11007 / NBRC 100824 / MB4) (Thermoanaerobacter tengcongensis)).